Here is a 368-residue protein sequence, read N- to C-terminus: tRNA-specific 2-thiouridylase MnmA (368 aa).

ATP-binding positions include 11 to 18 (GMSGGVDS) and Met37. The tract at residues 97–99 (NPD) is interaction with target base in tRNA. Cys102 serves as the catalytic Nucleophile. Cys102 and Cys199 form a disulfide bridge. Gly127 contacts ATP. Positions 149–151 (KDQ) are interaction with tRNA. Cys199 serves as the catalytic Cysteine persulfide intermediate. The segment at 311–312 (RY) is interaction with tRNA.

The protein belongs to the MnmA/TRMU family. As to quaternary structure, interacts with TusE.

It localises to the cytoplasm. The catalysed reaction is S-sulfanyl-L-cysteinyl-[protein] + uridine(34) in tRNA + AH2 + ATP = 2-thiouridine(34) in tRNA + L-cysteinyl-[protein] + A + AMP + diphosphate + H(+). Functionally, catalyzes the 2-thiolation of uridine at the wobble position (U34) of tRNA(Lys), tRNA(Glu) and tRNA(Gln), leading to the formation of s(2)U34, the first step of tRNA-mnm(5)s(2)U34 synthesis. Sulfur is provided by IscS, via a sulfur-relay system. Binds ATP and its substrate tRNAs. The protein is tRNA-specific 2-thiouridylase MnmA of Salmonella arizonae (strain ATCC BAA-731 / CDC346-86 / RSK2980).